The following is a 450-amino-acid chain: Neuronal acetylcholine receptor subunit alpha-10 (450 aa).

A signal peptide spans 1 to 24 (MGLRSHHLSLGLLLLFLLPAECLG). The Extracellular portion of the chain corresponds to 25-237 (AEGRLALKLF…FTLLLRRRAA (213 aa)). Asparagine 40 and asparagine 56 each carry an N-linked (GlcNAc...) asparagine glycan. 2 cysteine pairs are disulfide-bonded: cysteine 154/cysteine 168 and cysteine 218/cysteine 219. 3 consecutive transmembrane segments (helical) span residues 238-258 (AYVC…PLAF), 268-288 (VSLG…LAES), and 302-322 (YMAT…IMNL). The Cytoplasmic portion of the chain corresponds to 323–428 (HYCGPSVRPV…WKRLARVMDR (106 aa)). The interval 355 to 380 (EPCGQSRPPELSPSPQSPEGGAGPPA) is disordered. The helical transmembrane segment at 429 to 449 (FFLAIFFSMALVMSLLVLVQA) threads the bilayer.

Belongs to the ligand-gated ion channel (TC 1.A.9) family. Acetylcholine receptor (TC 1.A.9.1) subfamily. Alpha-10/CHRNA10 sub-subfamily. In terms of assembly, forms homo- or heterooligomeric channels in conjunction with CHRNA10. The native outer hair cell receptor may be composed of CHRNA9:CHRNA10 heterooligomers. Found in the stoichiometric form (CHRNA9)2:(CHRNA10)3. In terms of tissue distribution, expressed in inner-ear tissue, tonsil, immortalized B-cells, cultured T-cells and peripheral blood lymphocytes.

The protein resides in the synaptic cell membrane. The protein localises to the cell membrane. It catalyses the reaction Ca(2+)(in) = Ca(2+)(out). The catalysed reaction is K(+)(in) = K(+)(out). It carries out the reaction Na(+)(in) = Na(+)(out). The enzyme catalyses Mg(2+)(in) = Mg(2+)(out). With respect to regulation, activated by a myriad of ligands such as acetylcholine. AChR activity is inhibited by the antagonists alpha-conotoxins RgIA and GeXXA, small disulfide-constrained peptides from cone snails. In terms of biological role, component of neuronal acetylcholine receptors (nAChRs) that function as pentameric, ligand-gated cation channels with high calcium permeability. nAChRs are excitatory neurotrasnmitter receptors formed by a collection of nAChR subunits. Each nAchR subunit confers differential attributes to channel properties, including activation, deactivation and desensitization kinetics, pH sensitivity, cation permeability, and binding to allosteric modulators. Forms heteropentamers with CHRNA9. Expressed in the inner ear, in sympathetic neurons and in other non-neuronal cells, such as skin keratinocytes and lymphocytes. nAChR formed by CHRNA9:CHRNA10 is involved in modulation of auditory stimuli. The channel is permeable to a range of divalent cations including calcium, the influx of which may activate a potassium current which hyperpolarizes the cell membrane. In the ear, mediates synaptic transmission between efferent olivocochlear fibers and hair cells of the cochlea, this may lead to a reduction in basilar membrane motion, altering the activity of auditory nerve fibers and reducing the range of dynamic hearing. This may protect against acoustic trauma. May also regulate keratinocyte adhesion. The chain is Neuronal acetylcholine receptor subunit alpha-10 from Homo sapiens (Human).